We begin with the raw amino-acid sequence, 149 residues long: MNKGHRHIIIRELITSNEIDTQEDLVELLLERDVKVTQATVSRDIKELHLVKVPTQTGGYKYSLPADNSFNPHQKLKRALIDCFIGIDTVQFMIILKVMPGNGNSVGALIDNLDWPEKAGTICGDDTCLIICRSEENAKTLTDRFIDML.

This sequence belongs to the ArgR family.

The protein localises to the cytoplasm. It participates in amino-acid biosynthesis; L-arginine biosynthesis [regulation]. Its function is as follows. Regulates arginine biosynthesis genes. The sequence is that of Arginine repressor from Listeria welshimeri serovar 6b (strain ATCC 35897 / DSM 20650 / CCUG 15529 / CIP 8149 / NCTC 11857 / SLCC 5334 / V8).